Consider the following 119-residue polypeptide: Protein phosphatase EYA3 (119 aa).

It belongs to the HAD-like hydrolase superfamily. EYA family. Requires Mg(2+) as cofactor.

Its subcellular location is the cytoplasm. It is found in the nucleus. The catalysed reaction is O-phospho-L-tyrosyl-[protein] + H2O = L-tyrosyl-[protein] + phosphate. Tyrosine phosphatase that specifically dephosphorylates 'Tyr-142' of histone H2AX (H2AXY142ph). 'Tyr-142' phosphorylation of histone H2AX plays a central role in DNA repair and acts as a mark that distinguishes between apoptotic and repair responses to genotoxic stress. Promotes efficient DNA repair by dephosphorylating H2AX, promoting the recruitment of DNA repair complexes containing MDC1. Its function as histone phosphatase probably explains its role in transcription regulation during organogenesis. May be involved in development of the eye. This chain is Protein phosphatase EYA3 (EYA3), found in Gallus gallus (Chicken).